We begin with the raw amino-acid sequence, 903 residues long: DNA mismatch repair protein MutS (903 aa).

655-662 lines the ATP pocket; it reads GPNMAGKS.

It belongs to the DNA mismatch repair MutS family.

This protein is involved in the repair of mismatches in DNA. It is possible that it carries out the mismatch recognition step. This protein has a weak ATPase activity. The polypeptide is DNA mismatch repair protein MutS (Caulobacter vibrioides (strain ATCC 19089 / CIP 103742 / CB 15) (Caulobacter crescentus)).